The chain runs to 530 residues: RNA-binding protein 39 (530 aa).

The disordered stretch occupies residues 1 to 146 (MADDIDIEAM…PVREPIDNLT (146 aa)). At A2 the chain carries N-acetylalanine. A compositionally biased stretch (basic and acidic residues) spans 14–32 (PYKKDENKLSSANGHEERS). Composition is skewed to basic residues over residues 33–56 (KKRK…KERK) and 64–95 (KKSK…RGRY). Y95 carries the post-translational modification Phosphotyrosine. 2 positions are modified to phosphoserine: S97 and S100. K111 participates in a covalent cross-link: Glycyl lysine isopeptide (Lys-Gly) (interchain with G-Cter in SUMO2). S117 is modified (phosphoserine). A Glycyl lysine isopeptide (Lys-Gly) (interchain with G-Cter in SUMO2) cross-link involves residue K119. The span at 119-130 (KLSRRRSRSKSP) shows a compositional bias: basic residues. Phosphoserine occurs at positions 121 and 136. Positions 131 to 146 (FRKDKSPVREPIDNLT) are enriched in basic and acidic residues. T146 is modified (phosphothreonine). The RRM 1 domain occupies 153–230 (RTVFCMQLAA…VPIIVQASQA (78 aa)). A Glycyl lysine isopeptide (Lys-Gly) (interchain with G-Cter in SUMO2) cross-link involves residue K244. One can recognise an RRM 2 domain in the interval 250–328 (MRLYVGSLHF…RPMKVGHVTE (79 aa)). The segment at 291-355 (KGYGFITFSD…RTGIDLGTTG (65 aa)) is activating domain. The interval 291 to 406 (KGYGFITFSD…IDLQTRLSQQ (116 aa)) is interaction with JUN. Residues S334, S337, and S341 each carry the phosphoserine modification. Residues 355-406 (GRLQLMARLAEGTGLQIPPAAQQALQMSGSLAFGAVAEFSFVIDLQTRLSQQ) are interaction with ESR1 and ESR2. Residues 406–530 (QTEASALAAA…ATQLLVPSRR (125 aa)) are interaction with NCOA6. Positions 445-508 (EIKDDVIEEC…KMITAAYVPL (64 aa)) constitute an RRM 3 domain.

The protein belongs to the splicing factor SR family. Interacts with NCOA6 and JUN. Interacts with ESR1 and ESR2, in the presence of estradiol (E2). Interacts with RSRC1 (via Arg/Ser-rich domain). Interacts with SF3B1. Interacts with ZNF106 (via N-terminus). Post-translationally, aryl sulfonamide anticancer drugs, such as indisulam (E7070) or E7820, promote ubiquitination and subsequent degradation by the DCX(DCAF15) complex. RBM39 degradation results in splicing defects and death in cancer cell lines. Aryl sulfonamide anticancer drugs change the substrate specificity of DCAF15 by acting as a molecular glue that promotes binding between DCAF15 and weak affinity interactor RBM39. Widely expressed. Highly expressed in pancreas, skeletal muscle, lung and brain. Expressed at intermediate level in kidney, liver and heart.

Its subcellular location is the nucleus speckle. In terms of biological role, RNA-binding protein that acts as a pre-mRNA splicing factor. Acts by promoting exon inclusion via regulation of exon cassette splicing. Also acts as a transcriptional coactivator for steroid nuclear receptors ESR1/ER-alpha and ESR2/ER-beta, and JUN/AP-1, independently of the pre-mRNA splicing factor activity. The chain is RNA-binding protein 39 from Homo sapiens (Human).